A 207-amino-acid chain; its full sequence is Outer-membrane lipoprotein carrier protein (207 aa).

Positions 1–21 (MRLIRMLLLPVLAVTTLSAHA) are cleaved as a signal peptide.

The protein belongs to the LolA family. As to quaternary structure, monomer.

The protein resides in the periplasm. In terms of biological role, participates in the translocation of lipoproteins from the inner membrane to the outer membrane. Only forms a complex with a lipoprotein if the residue after the N-terminal Cys is not an aspartate (The Asp acts as a targeting signal to indicate that the lipoprotein should stay in the inner membrane). The chain is Outer-membrane lipoprotein carrier protein from Pseudomonas fluorescens (strain ATCC BAA-477 / NRRL B-23932 / Pf-5).